Reading from the N-terminus, the 178-residue chain is Cytidylate kinase (178 aa).

Residue 7–15 coordinates ATP; sequence GLPGSGTTS.

It belongs to the cytidylate kinase family. Type 2 subfamily.

It localises to the cytoplasm. It catalyses the reaction CMP + ATP = CDP + ADP. The catalysed reaction is dCMP + ATP = dCDP + ADP. This is Cytidylate kinase from Methanospirillum hungatei JF-1 (strain ATCC 27890 / DSM 864 / NBRC 100397 / JF-1).